The chain runs to 60 residues: Large ribosomal subunit protein bL32 (60 aa).

The interval 1–43 is disordered; the sequence is MAVQQNRKTRSRRGMRRSHDALTGKTLSVDSTTGEKHLRHHVT. Basic residues predominate over residues 7 to 16; that stretch reads RKTRSRRGMR.

This sequence belongs to the bacterial ribosomal protein bL32 family.

The protein is Large ribosomal subunit protein bL32 of Saccharophagus degradans (strain 2-40 / ATCC 43961 / DSM 17024).